A 1141-amino-acid chain; its full sequence is Envelopment polyprotein (1141 aa).

Residues 1–18 (MGRLYLIVLGVLITATAG) form the signal peptide. At 19–483 (FPRSVHELKI…HSLAVELCVP (465 aa)) the chain is on the lumenal side. 10 disulfides stabilise this stretch: C30-C158, C64-C164, C113-C135, C140-C145, C182-C192, C217-C253, C242-C357, C382-C441, C386-C395, and C458-C481. Residue N141 is glycosylated (N-linked (GlcNAc...) asparagine; by host). N353 is a glycosylation site (N-linked (GlcNAc...) asparagine; by host). N405 is a glycosylation site (N-linked (GlcNAc...) asparagine; by host). Residues 484 to 506 (GIHGWATIALVITFCFGWLLIPT) traverse the membrane as a helical segment. At 507–633 (TTMVVLKCLR…LGVFRYKSRC (127 aa)) the chain is on the cytoplasmic side. The segment at 522-539 (CSHYSTESKFKVILEKVK) is binding to the ribonucleoprotein. 2 consecutive CCHC-type zinc fingers follow at residues 551–571 (CDIC…KKSC) and 576–597 (CPYC…YAVC). Binding to the ribonucleoprotein regions lie at residues 594 to 611 (YAVC…KKSL), 598 to 609 (KLTGRFHEALKK), and 617 to 631 (QRGC…RYKS). The ITAM domain occupies 617-640 (QRGCYRTLGVFRYKSRCYVGLVWM). Phosphotyrosine is present on residues Y621 and Y634. A YxxL motif is present at residues 621 to 624 (YRTL). A helical transmembrane segment spans residues 634-654 (YVGLVWMCLLTLELIVWAASA). Residues 655–1110 (DTPLLEPGWS…EWLLGILNGN (456 aa)) are Lumenal-facing. 8 disulfides stabilise this stretch: C741/C776, C745/C783, C757/C890, C771/C901, C786/C909, C812/C821, C829/C838, and C869/C873. The interval 763–783 (YQYETSWSCNPPDCPGVGTGC) is fusion loop. N-linked (GlcNAc...) asparagine; by host glycosylation is present at N933. 5 disulfides stabilise this stretch: C975–C1005, C998–C1050, C1015–C1020, C1051–C1056, and C1090–C1094. A helical membrane pass occupies residues 1111–1131 (WVVVAVLVIILLISIFLFSFF). Residues 1127-1141 (LFSFFCPIRSHKKQL) are binding to the ribonucleoprotein. At 1132–1141 (CPIRSHKKQL) the chain is on the cytoplasmic side.

The protein belongs to the hantavirus envelope glycoprotein family. In terms of assembly, homodimer. Homotetramer; forms heterotetrameric Gn-Gc spikes in the pre-fusion conformation. Interacts (via C-terminus) with the nucleoprotein. Interacts with host TUFM; this interaction contributes to the virus-induced degradation of mitochondria by autophagy, which leads to degradation of host MAVS and inhibition of type I interferon (IFN) responses. Interacts with host MAP1LC3B; this interaction contributes to the virus-induced degradation of mitochondria by autophagy, which leads to degradation of host MAVS and inhibition of type I interferon (IFN) responses. As to quaternary structure, homodimer. Homotetramer; forms heterotetrameric Gn-Gc spikes in the pre-fusion conformation. Homotrimer; forms homotrimer in the post-fusion conformation at acidic pH. Interacts (via C-terminus) with the nucleoprotein. In terms of processing, envelope polyprotein precursor is quickly cleaved in vivo just after synthesis, presumably by host signal peptidase.

The protein localises to the virion membrane. The protein resides in the host cell surface. Its subcellular location is the host Golgi apparatus membrane. It is found in the host endoplasmic reticulum membrane. It localises to the host mitochondrion. Functionally, forms homotetramers with glycoprotein C at the surface of the virion. Attaches the virion to host cell receptors including integrin ITGAV/ITGB3. This attachment induces virion internalization predominantly through clathrin-dependent endocytosis. Mediates the assembly and budding of infectious virus particles through its interaction with the nucleocapsid protein and the viral genome. May dysregulate normal immune and endothelial cell responses through an ITAM motif. Translocates to mitochondria, binds to host TUFM and recruits MAP1LC3B. These interactions induce mitochondrial autophagy and therefore destruction of host MAVS leading to inhibition of type I interferon (IFN) responses. Concomitant breakdown of glycoprotein N is apparently prevented by the nucleoprotein that may inhibit Gn-stimulated autophagosome-lysosome fusion. Interacts with the viral genomic RNA. In terms of biological role, forms homotetramers with glycoprotein N at the surface of the virion. Attaches the virion to host cell receptors including integrin ITGAV/ITGB3. This attachment induces virion internalization predominantly through clathrin-dependent endocytosis. Class II fusion protein that promotes fusion of viral membrane with host endosomal membrane after endocytosis of the virion. In Homo sapiens (Human), this protein is Envelopment polyprotein (GP).